A 372-amino-acid polypeptide reads, in one-letter code: Putative actin-27 (372 aa).

The protein belongs to the actin family.

It localises to the cytoplasm. The protein localises to the cytoskeleton. The enzyme catalyses ATP + H2O = ADP + phosphate + H(+). Its function is as follows. Actins are highly conserved proteins that are involved in various types of cell motility and are ubiquitously expressed in all eukaryotic cells. Multiple isoforms are involved in various cellular functions such as cytoskeleton structure, cell mobility, chromosome movement and muscle contraction. In Dictyostelium discoideum (Social amoeba), this protein is Putative actin-27 (act27).